The primary structure comprises 83 residues: Small ribosomal subunit protein eS21 (83 aa).

An N-acetylmethionine modification is found at methionine 1. Lysine 41 is covalently cross-linked (Glycyl lysine isopeptide (Lys-Gly) (interchain with G-Cter in SUMO2)). The residue at position 81 (lysine 81) is an N6-acetyllysine.

It belongs to the eukaryotic ribosomal protein eS21 family. Component of the 40S small ribosomal subunit.

The protein resides in the cytoplasm. It is found in the cytosol. The protein localises to the rough endoplasmic reticulum. Functionally, component of the small ribosomal subunit. The ribosome is a large ribonucleoprotein complex responsible for the synthesis of proteins in the cell. This Sus scrofa (Pig) protein is Small ribosomal subunit protein eS21 (RPS21).